The chain runs to 563 residues: Light-independent protochlorophyllide reductase subunit B (563 aa).

Asp36 serves as a coordination point for [4Fe-4S] cluster. Asp293 functions as the Proton donor in the catalytic mechanism. 437–438 (GM) contacts substrate. Positions 459-478 (ERREAEFGNQKVETGEPGTG) are disordered.

It belongs to the ChlB/BchB/BchZ family. As to quaternary structure, protochlorophyllide reductase is composed of three subunits; BchL, BchN and BchB. Forms a heterotetramer of two BchB and two BchN subunits. It depends on [4Fe-4S] cluster as a cofactor.

The catalysed reaction is chlorophyllide a + oxidized 2[4Fe-4S]-[ferredoxin] + 2 ADP + 2 phosphate = protochlorophyllide a + reduced 2[4Fe-4S]-[ferredoxin] + 2 ATP + 2 H2O. It participates in porphyrin-containing compound metabolism; bacteriochlorophyll biosynthesis (light-independent). Functionally, component of the dark-operative protochlorophyllide reductase (DPOR) that uses Mg-ATP and reduced ferredoxin to reduce ring D of protochlorophyllide (Pchlide) to form chlorophyllide a (Chlide). This reaction is light-independent. The NB-protein (BchN-BchB) is the catalytic component of the complex. The sequence is that of Light-independent protochlorophyllide reductase subunit B from Roseiflexus castenholzii (strain DSM 13941 / HLO8).